Reading from the N-terminus, the 336-residue chain is Probable allantoicase 2 (336 aa).

The protein belongs to the allantoicase family.

It carries out the reaction allantoate + H2O = (S)-ureidoglycolate + urea. It functions in the pathway nitrogen metabolism; (S)-allantoin degradation; (S)-ureidoglycolate from allantoate (aminidohydrolase route): step 1/1. The chain is Probable allantoicase 2 from Burkholderia mallei (strain ATCC 23344).